The primary structure comprises 203 residues: MATSSLTPGVSLDENGSIKLFNKFPFEGVEVKDISLVDYITIGNGQPLPHTAGRFQTKRFRKARCFIVERLTNSLMMNGRNNGKKLLATRIVKHAFEIIALLTDQNPLQVLVDAVAACGPREDSTRIGSAGTVRRQAVDVSPLRRVNQALALITIGAREAAFRNVKSISECLAEEIINAAKGSSNSYAIKKKDELERVAKSNR.

This sequence belongs to the universal ribosomal protein uS7 family. As to quaternary structure, component of the small ribosomal subunit (SSU). Mature yeast ribosomes consist of a small (40S) and a large (60S) subunit. The 40S small subunit contains 1 molecule of ribosomal RNA (18S rRNA) and at least 33 different proteins. The large 60S subunit contains 3 rRNA molecules (25S, 5.8S and 5S rRNA) and at least 46 different proteins.

The protein localises to the cytoplasm. The protein resides in the nucleus. Its subcellular location is the nucleolus. In terms of biological role, component of the ribosome, a large ribonucleoprotein complex responsible for the synthesis of proteins in the cell. The small ribosomal subunit (SSU) binds messenger RNAs (mRNAs) and translates the encoded message by selecting cognate aminoacyl-transfer RNA (tRNA) molecules. The large subunit (LSU) contains the ribosomal catalytic site termed the peptidyl transferase center (PTC), which catalyzes the formation of peptide bonds, thereby polymerizing the amino acids delivered by tRNAs into a polypeptide chain. The nascent polypeptides leave the ribosome through a tunnel in the LSU and interact with protein factors that function in enzymatic processing, targeting, and the membrane insertion of nascent chains at the exit of the ribosomal tunnel. In Schizosaccharomyces pombe (strain 972 / ATCC 24843) (Fission yeast), this protein is Small ribosomal subunit protein uS7A (rps5).